The sequence spans 485 residues: GTPase Der (485 aa).

EngA-type G domains are found at residues 3-167 (PTIA…PEPE) and 176-349 (PVFA…NAAM). Residues 9–16 (GRPNVGKS), 56–60 (DTGGF), 119–122 (NKGE), 182–189 (GRPNVGKS), 229–233 (DTAGV), and 294–297 (NKWD) contribute to the GTP site. One can recognise a KH-like domain in the interval 350–434 (IKMPTPKITR…PLRIQYNVSE (85 aa)). A disordered region spans residues 435–485 (NPYENADDKPKKKPLRRVSLSNRIEKREGRKEEKNRFKKKTKVSVKKQFSK). Positions 457–469 (RIEKREGRKEEKN) are enriched in basic and acidic residues. A compositionally biased stretch (basic residues) spans 470-485 (RFKKKTKVSVKKQFSK).

Belongs to the TRAFAC class TrmE-Era-EngA-EngB-Septin-like GTPase superfamily. EngA (Der) GTPase family. As to quaternary structure, associates with the 50S ribosomal subunit.

In terms of biological role, GTPase that plays an essential role in the late steps of ribosome biogenesis. The sequence is that of GTPase Der from Neisseria meningitidis serogroup A / serotype 4A (strain DSM 15465 / Z2491).